The following is a 386-amino-acid chain: MGFLFTSESVNEGHPDKLADQISDGILDACLEQDPDSKVACETATKTNMVMVFGEITTKAKVDYEAVVRQVCRDVGFISNETGLDGNNCRVLVELHDQSPDIGQGVHGMGTKSLEEIGAGDQGHMFGYATDETPELMPLTHVLATKLGHRLTVVRKDGTCPWVLPDGKTQVTIEYENEGGAMIPKRVHTILISTQHIEGVSNEKIAEDLMNEVIKKVVPEKYLDADTIFHLNPSGRFVIGGPDGDAGLTGRKIIIDTYGGWGAHGGGAFSGKDPTKVDRSGAYIARQVAKSIVAAGLARRALFQISYAIGVAQPLSIHVDTYGSGKIPDSEILEKVKEKFDFRAGMIGKSLDLKRGGNKRYQTTAAYGHFGRDDTDVFTWEKVVPL.

Position 8 (E8) interacts with Mg(2+). H14 is an ATP binding site. E42 provides a ligand contact to K(+). The L-methionine site is built by E55 and Q98. ATP is bound by residues 166–168, 234–237, D245, 251–252, A268, K272, and K276; these read DGK, SGRF, and RK. Residue D245 coordinates L-methionine. Residue K276 participates in L-methionine binding.

It belongs to the AdoMet synthase family. Homotetramer. Requires Mn(2+) as cofactor. Mg(2+) serves as cofactor. It depends on Co(2+) as a cofactor. The cofactor is K(+).

It is found in the cytoplasm. The enzyme catalyses L-methionine + ATP + H2O = S-adenosyl-L-methionine + phosphate + diphosphate. It participates in amino-acid biosynthesis; S-adenosyl-L-methionine biosynthesis; S-adenosyl-L-methionine from L-methionine: step 1/1. Its function is as follows. Catalyzes the formation of S-adenosylmethionine from methionine and ATP. The reaction comprises two steps that are both catalyzed by the same enzyme: formation of S-adenosylmethionine (AdoMet) and triphosphate, and subsequent hydrolysis of the triphosphate. The polypeptide is S-adenosylmethionine synthase (METK) (Ostreococcus tauri).